Here is a 205-residue protein sequence, read N- to C-terminus: Urease accessory protein UreG (205 aa).

14–21 (GPVGSGKT) serves as a coordination point for GTP.

This sequence belongs to the SIMIBI class G3E GTPase family. UreG subfamily. In terms of assembly, homodimer. UreD, UreF and UreG form a complex that acts as a GTP-hydrolysis-dependent molecular chaperone, activating the urease apoprotein by helping to assemble the nickel containing metallocenter of UreC. The UreE protein probably delivers the nickel.

It is found in the cytoplasm. In terms of biological role, facilitates the functional incorporation of the urease nickel metallocenter. This process requires GTP hydrolysis, probably effectuated by UreG. This Escherichia coli protein is Urease accessory protein UreG.